We begin with the raw amino-acid sequence, 141 residues long: Large ribosomal subunit protein uL11 (141 aa).

This sequence belongs to the universal ribosomal protein uL11 family. Part of the ribosomal stalk of the 50S ribosomal subunit. Interacts with L10 and the large rRNA to form the base of the stalk. L10 forms an elongated spine to which L12 dimers bind in a sequential fashion forming a multimeric L10(L12)X complex. One or more lysine residues are methylated.

In terms of biological role, forms part of the ribosomal stalk which helps the ribosome interact with GTP-bound translation factors. This is Large ribosomal subunit protein uL11 from Streptococcus sanguinis (strain SK36).